The sequence spans 70 residues: Putative membrane protein insertion efficiency factor (70 aa).

It belongs to the UPF0161 family.

It localises to the cell inner membrane. In terms of biological role, could be involved in insertion of integral membrane proteins into the membrane. In Geobacter sp. (strain M21), this protein is Putative membrane protein insertion efficiency factor.